Reading from the N-terminus, the 243-residue chain is Triosephosphate isomerase (243 aa).

9-11 (NWK) lines the substrate pocket. Catalysis depends on H96, which acts as the Electrophile. The active-site Proton acceptor is the E165. Substrate is bound by residues G171, S204, and 225–226 (GG).

Belongs to the triosephosphate isomerase family. In terms of assembly, homodimer.

It localises to the cytoplasm. It carries out the reaction D-glyceraldehyde 3-phosphate = dihydroxyacetone phosphate. The protein operates within carbohydrate biosynthesis; gluconeogenesis. It participates in carbohydrate degradation; glycolysis; D-glyceraldehyde 3-phosphate from glycerone phosphate: step 1/1. Functionally, involved in the gluconeogenesis. Catalyzes stereospecifically the conversion of dihydroxyacetone phosphate (DHAP) to D-glyceraldehyde-3-phosphate (G3P). In Parasynechococcus marenigrum (strain WH8102), this protein is Triosephosphate isomerase.